Consider the following 213-residue polypeptide: Thymidylate kinase (213 aa).

11–18 (GPEGAGKT) serves as a coordination point for ATP.

Belongs to the thymidylate kinase family.

The enzyme catalyses dTMP + ATP = dTDP + ADP. Its function is as follows. Phosphorylation of dTMP to form dTDP in both de novo and salvage pathways of dTTP synthesis. This is Thymidylate kinase from Leuconostoc mesenteroides subsp. mesenteroides (strain ATCC 8293 / DSM 20343 / BCRC 11652 / CCM 1803 / JCM 6124 / NCDO 523 / NBRC 100496 / NCIMB 8023 / NCTC 12954 / NRRL B-1118 / 37Y).